The chain runs to 89 residues: Small ribosomal subunit protein uS15 (89 aa).

This sequence belongs to the universal ribosomal protein uS15 family. As to quaternary structure, part of the 30S ribosomal subunit. Forms a bridge to the 50S subunit in the 70S ribosome, contacting the 23S rRNA.

Its function is as follows. One of the primary rRNA binding proteins, it binds directly to 16S rRNA where it helps nucleate assembly of the platform of the 30S subunit by binding and bridging several RNA helices of the 16S rRNA. In terms of biological role, forms an intersubunit bridge (bridge B4) with the 23S rRNA of the 50S subunit in the ribosome. This Dechloromonas aromatica (strain RCB) protein is Small ribosomal subunit protein uS15.